We begin with the raw amino-acid sequence, 419 residues long: eIF5-mimic protein 1 (419 aa).

Residues 1 to 22 (MNKHQKPVLTGQRFKTRKRDEK) form a disordered region. Lysine 117 carries the post-translational modification N6-acetyllysine. The 168-residue stretch at 248–415 (VQQSLGTRKE…QNAEEESESE (168 aa)) folds into the W2 domain. Phosphoserine occurs at positions 412, 414, and 419.

Belongs to the BZW family. Interacts with EIF3E, EIF2S2 and EIF3C.

The protein localises to the cytoplasm. In terms of biological role, translation initiation regulator which represses non-AUG initiated translation and repeat-associated non-AUG (RAN) initiated translation by acting as a competitive inhibitor of eukaryotic translation initiation factor 5 (EIF5) function. Increases the accuracy of translation initiation by impeding EIF5-dependent translation from non-AUG codons by competing with it for interaction with EIF2S2 within the 43S pre-initiation complex (PIC) in an EIF3C-binding dependent manner. The protein is eIF5-mimic protein 1 (Bzw2) of Mus musculus (Mouse).